A 311-amino-acid polypeptide reads, in one-letter code: Ribosomal RNA small subunit methyltransferase H (311 aa).

S-adenosyl-L-methionine is bound by residues 33–35, Asp-53, Phe-80, Asp-101, and Gln-108; that span reads AGH.

Belongs to the methyltransferase superfamily. RsmH family.

It localises to the cytoplasm. It carries out the reaction cytidine(1402) in 16S rRNA + S-adenosyl-L-methionine = N(4)-methylcytidine(1402) in 16S rRNA + S-adenosyl-L-homocysteine + H(+). In terms of biological role, specifically methylates the N4 position of cytidine in position 1402 (C1402) of 16S rRNA. This Geobacter sulfurreducens (strain ATCC 51573 / DSM 12127 / PCA) protein is Ribosomal RNA small subunit methyltransferase H.